The following is a 161-amino-acid chain: E3 ubiquitin ligase complex SCF subunit sconC (161 aa).

An interaction with the F-box domain of F-box proteins region spans residues 102-161; sequence ILAANYLDIKPLLDIGCKTVANMIKGKSPEEIRKTFNIQNDFTPEEEDQIRRENEWAEDR.

This sequence belongs to the SKP1 family. Component of the SCF (SKP1-CUL1-F-box protein) E3 ubiquitin ligase complexes.

It participates in protein modification; protein ubiquitination. Essential component of the SCF (SKP1-CUL1-F-box protein) E3 ubiquitin ligase complexes, which mediate the ubiquitination and subsequent proteasomal degradation of target proteins. Controls sulfur metabolite repression, probably by mediating the inactivation or degradation of the metR transcription factor. This is E3 ubiquitin ligase complex SCF subunit sconC (sconC) from Emericella nidulans (strain FGSC A4 / ATCC 38163 / CBS 112.46 / NRRL 194 / M139) (Aspergillus nidulans).